A 142-amino-acid polypeptide reads, in one-letter code: Hemoglobin subunit alpha (142 aa).

Positions 2–142 (VLSAADKGHV…VSTVLTSKYR (141 aa)) constitute a Globin domain. A Phosphoserine modification is found at Ser-4. 2 positions are modified to N6-succinyllysine: Lys-8 and Lys-12. Lys-17 is subject to N6-acetyllysine; alternate. Lys-17 bears the N6-succinyllysine; alternate mark. The residue at position 25 (Tyr-25) is a Phosphotyrosine. A Phosphoserine modification is found at Ser-36. Residue Lys-41 is modified to N6-succinyllysine. Phosphoserine is present on Ser-50. His-59 serves as a coordination point for O2. His-88 is a binding site for heme b. Ser-103 is subject to Phosphoserine. Thr-109 is modified (phosphothreonine). Ser-125 is subject to Phosphoserine. Residues Thr-135 and Thr-138 each carry the phosphothreonine modification. Ser-139 is modified (phosphoserine).

This sequence belongs to the globin family. In terms of assembly, heterotetramer of two alpha chains and two beta chains. Red blood cells.

Involved in oxygen transport from the lung to the various peripheral tissues. Its function is as follows. Hemopressin acts as an antagonist peptide of the cannabinoid receptor CNR1. Hemopressin-binding efficiently blocks cannabinoid receptor CNR1 and subsequent signaling. This chain is Hemoglobin subunit alpha (HBA), found in Notamacropus eugenii (Tammar wallaby).